The following is a 103-amino-acid chain: N(4)-acetylcytidine amidohydrolase (103 aa).

Residues 6-94 form the ASCH domain; the sequence is ITFFQRFQND…IAEIYPNQTQ (89 aa). The Proton acceptor role is filled by K21. T24 (nucleophile) is an active-site residue. The Proton donor role is filled by E74.

The protein belongs to the N(4)-acetylcytidine amidohydrolase family.

The enzyme catalyses N(4)-acetylcytidine + H2O = cytidine + acetate + H(+). It carries out the reaction N(4)-acetyl-2'-deoxycytidine + H2O = 2'-deoxycytidine + acetate + H(+). The catalysed reaction is N(4)-acetylcytosine + H2O = cytosine + acetate + H(+). Its function is as follows. Catalyzes the hydrolysis of N(4)-acetylcytidine (ac4C). The polypeptide is N(4)-acetylcytidine amidohydrolase (yqfB) (Salmonella schwarzengrund (strain CVM19633)).